We begin with the raw amino-acid sequence, 215 residues long: Phosphoenolpyruvate guanylyltransferase (215 aa).

Residues Thr144, Gly159, and Ser162 each contribute to the phosphoenolpyruvate site.

It belongs to the CofC family.

The enzyme catalyses phosphoenolpyruvate + GTP + H(+) = enolpyruvoyl-2-diphospho-5'-guanosine + diphosphate. Its pathway is cofactor biosynthesis; coenzyme F420 biosynthesis. In terms of biological role, guanylyltransferase that catalyzes the activation of phosphoenolpyruvate (PEP) as enolpyruvoyl-2-diphospho-5'-guanosine, via the condensation of PEP with GTP. It is involved in the biosynthesis of coenzyme F420, a hydride carrier cofactor. The sequence is that of Phosphoenolpyruvate guanylyltransferase from Geodermatophilus obscurus (strain ATCC 25078 / DSM 43160 / JCM 3152 / CCUG 61914 / KCC A-0152 / KCTC 9177 / NBRC 13315 / NRRL B-3577 / G-20).